The primary structure comprises 539 residues: Alpha-aminoadipic semialdehyde dehydrogenase (539 aa).

The N-terminal 26 residues, 1 to 26, are a transit peptide targeting the mitochondrion; that stretch reads MLRLARPLCVQTVKASKLSRLWSRPA. An N6-acetyllysine; alternate mark is found at Lys-86, Lys-94, and Lys-97. 3 positions are modified to N6-succinyllysine; alternate: Lys-86, Lys-94, and Lys-97. NAD(+) contacts are provided by residues 192-194, Lys-218, 258-259, 274-275, 274-279, and 296-297; these read TAF, GT, GS, GSTQVG, and EL. Glu-296 functions as the Proton acceptor in the catalytic mechanism. Cys-330 serves as the catalytic Nucleophile. Residue Thr-331 coordinates (S)-2-amino-6-oxohexanoate. Residue Glu-427 participates in NAD(+) binding. At Lys-462 the chain carries N6-acetyllysine. 2 residues coordinate (S)-2-amino-6-oxohexanoate: Gly-489 and Ala-490. Lys-500 is modified (N6-acetyllysine). Lys-537 bears the N6-succinyllysine mark.

It belongs to the aldehyde dehydrogenase family. As to quaternary structure, homotetramer. In terms of tissue distribution, abundant in kidney, liver, cochlea and outer hair cells but not inner hair cells or vestibular type I hair cells. Very low levels in lung, brain, intestine and pancreas.

Its subcellular location is the cytoplasm. The protein localises to the cytosol. It is found in the nucleus. It localises to the mitochondrion. The catalysed reaction is nonanal + NAD(+) + H2O = nonanoate + NADH + 2 H(+). It carries out the reaction (S)-2-amino-6-oxohexanoate + NAD(+) + H2O = L-2-aminoadipate + NADH + 2 H(+). It catalyses the reaction betaine aldehyde + NAD(+) + H2O = glycine betaine + NADH + 2 H(+). The enzyme catalyses an aldehyde + NAD(+) + H2O = a carboxylate + NADH + 2 H(+). The catalysed reaction is hexanal + NAD(+) + H2O = hexanoate + NADH + 2 H(+). It carries out the reaction octanal + NAD(+) + H2O = octanoate + NADH + 2 H(+). It catalyses the reaction (E)-non-2-enal + NAD(+) + H2O = (E)-non-2-enoate + NADH + 2 H(+). The enzyme catalyses (E)-4-hydroxynon-2-enal + NAD(+) + H2O = (E)-4-hydroxynon-2-enoate + NADH + 2 H(+). The protein operates within amine and polyamine biosynthesis; betaine biosynthesis via choline pathway; betaine from betaine aldehyde: step 1/1. In terms of biological role, multifunctional enzyme mediating important protective effects. Metabolizes betaine aldehyde to betaine, an important cellular osmolyte and methyl donor. Protects cells from oxidative stress by metabolizing a number of lipid peroxidation-derived aldehydes. Involved in lysine catabolism. This is Alpha-aminoadipic semialdehyde dehydrogenase from Rattus norvegicus (Rat).